The following is a 264-amino-acid chain: [LysW]-aminoadipate/[LysW]-glutamate kinase (264 aa).

Residues 35–36 (GG), Arg-62, and Asn-167 each bind substrate.

It belongs to the acetylglutamate kinase family. LysZ subfamily.

It is found in the cytoplasm. It carries out the reaction [amino-group carrier protein]-C-terminal-N-(1,4-dicarboxybutan-1-yl)-L-glutamine + ATP = [amino-group carrier protein]-C-terminal-N-(1-carboxy-5-phosphooxy-5-oxopentan-1-yl)-L-glutamine + ADP. The catalysed reaction is [amino-group carrier protein]-C-terminal-gamma-(L-glutamyl)-L-glutamate + ATP = [amino-group carrier protein]-C-terminal-gamma-(5-phospho-L-glutamyl)-L-glutamate + ADP. It participates in amino-acid biosynthesis; L-lysine biosynthesis via AAA pathway; L-lysine from L-alpha-aminoadipate (Thermus route): step 2/5. Its pathway is amino-acid biosynthesis; L-arginine biosynthesis. Involved in both the arginine and lysine biosynthetic pathways. Phosphorylates the LysW-bound precursors glutamate (for arginine biosynthesis), respectively alpha-aminoadipate (for lysine biosynthesis). The chain is [LysW]-aminoadipate/[LysW]-glutamate kinase from Saccharolobus solfataricus (strain ATCC 35092 / DSM 1617 / JCM 11322 / P2) (Sulfolobus solfataricus).